Reading from the N-terminus, the 140-residue chain is uncharacterized protein (140 aa).

This is an uncharacterized protein from Acidianus ambivalens (Desulfurolobus ambivalens).